The following is a 373-amino-acid chain: Hydrogenase maturation factor HypD (373 aa).

3 residues coordinate Fe cation: cysteine 41, cysteine 69, and cysteine 72.

It belongs to the HypD family. As to quaternary structure, monomer. Interacts with HypC. Forms a complex with HypC, or HybG, and HypE. The cofactor is [4Fe-4S] cluster.

The protein operates within protein modification; [NiFe] hydrogenase maturation. Functionally, involved in the maturation of [NiFe] hydrogenases. Involved in the biosynthesis of the Fe(CN)(2)CO cofactor. HypD may act as a scaffold on which the Fe(CN)(2)CO cofactor is formed. In complex with HypC, accepts the cyanide ligand generated by HypF and HypE, and also coordinates the carbon monoxide ligand. Required for the formation of all three hydrogenase isoenzymes. The protein is Hydrogenase maturation factor HypD of Escherichia coli (strain K12).